The primary structure comprises 163 residues: Crossover junction endodeoxyribonuclease RuvC (163 aa).

Catalysis depends on residues aspartate 9, glutamate 76, and aspartate 148. The Mg(2+) site is built by aspartate 9, glutamate 76, and aspartate 148.

It belongs to the RuvC family. In terms of assembly, homodimer which binds Holliday junction (HJ) DNA. The HJ becomes 2-fold symmetrical on binding to RuvC with unstacked arms; it has a different conformation from HJ DNA in complex with RuvA. In the full resolvosome a probable DNA-RuvA(4)-RuvB(12)-RuvC(2) complex forms which resolves the HJ. It depends on Mg(2+) as a cofactor.

The protein resides in the cytoplasm. It catalyses the reaction Endonucleolytic cleavage at a junction such as a reciprocal single-stranded crossover between two homologous DNA duplexes (Holliday junction).. Its function is as follows. The RuvA-RuvB-RuvC complex processes Holliday junction (HJ) DNA during genetic recombination and DNA repair. Endonuclease that resolves HJ intermediates. Cleaves cruciform DNA by making single-stranded nicks across the HJ at symmetrical positions within the homologous arms, yielding a 5'-phosphate and a 3'-hydroxyl group; requires a central core of homology in the junction. The consensus cleavage sequence is 5'-(A/T)TT(C/G)-3'. Cleavage occurs on the 3'-side of the TT dinucleotide at the point of strand exchange. HJ branch migration catalyzed by RuvA-RuvB allows RuvC to scan DNA until it finds its consensus sequence, where it cleaves and resolves the cruciform DNA. This Nostoc punctiforme (strain ATCC 29133 / PCC 73102) protein is Crossover junction endodeoxyribonuclease RuvC.